The sequence spans 439 residues: Large ribosomal subunit protein mL65 (439 aa).

The protein belongs to the mitochondrion-specific ribosomal protein mL65 family. In terms of assembly, component of the mitochondrial large ribosomal subunit (mt-LSU). Mature mammalian 55S mitochondrial ribosomes consist of a small (28S) and a large (39S) subunit. The 28S small subunit contains a 12S ribosomal RNA (12S mt-rRNA) and 30 different proteins. The 39S large subunit contains a 16S rRNA (16S mt-rRNA), a copy of mitochondrial valine transfer RNA (mt-tRNA(Val)), which plays an integral structural role, and 52 different proteins. mL65 forms a heterodimer with mL37. In terms of tissue distribution, heart, skeletal muscle, kidney and liver. Lower expression in placenta and peripheral blood leukocytes.

The protein resides in the mitochondrion. This is Large ribosomal subunit protein mL65 (MRPS30) from Homo sapiens (Human).